The primary structure comprises 188 residues: SRP-independent targeting protein 3 (188 aa).

The chain crosses the membrane as a helical span at residues 27–47; it reads TIIMYIRILYCSSIGISWIIY. Serine 157 carries the phosphoserine modification. The interval 157–188 is disordered; the sequence is SLFGGMGQTGPKTDKKSIEEAERAGNAGVKAE. Positions 168–179 are enriched in basic and acidic residues; the sequence is KTDKKSIEEAER.

The protein belongs to the PHO88 family. Interacts with ENV10/SND2. ENV10/SND2 and PHO88/SND3 form a complex with the translocon in the endoplasmic reticulum membrane.

It localises to the endoplasmic reticulum membrane. The protein localises to the mitochondrion. Its function is as follows. Functions in the SND pathway, a SRP (signal recognition particle) and GET (guided entry of tail-anchored proteins) independent pathway for targeting a broad range of substrate proteins to the endoplasmic reticulum. SND functions in parallel to GET in targeting proteins with downstream hydrophobic motifs. Involved in inorganic phosphate uptake. Also involved in telomere length regulation and maintenance. The sequence is that of SRP-independent targeting protein 3 from Saccharomyces cerevisiae (strain ATCC 204508 / S288c) (Baker's yeast).